The following is a 242-amino-acid chain: DNA repair protein RecO (242 aa).

This sequence belongs to the RecO family.

Involved in DNA repair and RecF pathway recombination. The polypeptide is DNA repair protein RecO (Nitrosospira multiformis (strain ATCC 25196 / NCIMB 11849 / C 71)).